Reading from the N-terminus, the 142-residue chain is Large ribosomal subunit protein uL13 (142 aa).

This sequence belongs to the universal ribosomal protein uL13 family. As to quaternary structure, part of the 50S ribosomal subunit.

This protein is one of the early assembly proteins of the 50S ribosomal subunit, although it is not seen to bind rRNA by itself. It is important during the early stages of 50S assembly. The sequence is that of Large ribosomal subunit protein uL13 from Azotobacter vinelandii (strain DJ / ATCC BAA-1303).